Reading from the N-terminus, the 102-residue chain is Small ribosomal subunit protein uS10 (102 aa).

This sequence belongs to the universal ribosomal protein uS10 family. As to quaternary structure, part of the 30S ribosomal subunit.

Its function is as follows. Involved in the binding of tRNA to the ribosomes. The protein is Small ribosomal subunit protein uS10 of Rhizobium meliloti (strain 1021) (Ensifer meliloti).